A 293-amino-acid polypeptide reads, in one-letter code: Phosphate import ATP-binding protein PstB (293 aa).

The ABC transporter domain occupies 46–288 (FGIRGVDVFY…PDHELTEAYI (243 aa)). An ATP-binding site is contributed by 78-85 (GPSGCGKS).

The protein belongs to the ABC transporter superfamily. Phosphate importer (TC 3.A.1.7) family. As to quaternary structure, the complex is composed of two ATP-binding proteins (PstB), two transmembrane proteins (PstC and PstA) and a solute-binding protein (PstS).

The protein resides in the cell inner membrane. The enzyme catalyses phosphate(out) + ATP + H2O = ADP + 2 phosphate(in) + H(+). In terms of biological role, part of the ABC transporter complex PstSACB involved in phosphate import. Responsible for energy coupling to the transport system. In Saccharophagus degradans (strain 2-40 / ATCC 43961 / DSM 17024), this protein is Phosphate import ATP-binding protein PstB.